The primary structure comprises 280 residues: Thiamine-phosphate synthase (280 aa).

Residues 1–64 form a disordered region; that stretch reads MGWSGSPLTL…ATGRGGLRMT (64 aa). The segment covering 42-55 has biased composition (basic and acidic residues); it reads GRGELRSRERRGEA. 4-amino-2-methyl-5-(diphosphooxymethyl)pyrimidine-binding positions include 104-108 and N141; that span reads QLRCK. Mg(2+)-binding residues include D142 and D161. S179 contributes to the 4-amino-2-methyl-5-(diphosphooxymethyl)pyrimidine binding site. 205–207 contributes to the 2-[(2R,5Z)-2-carboxy-4-methylthiazol-5(2H)-ylidene]ethyl phosphate binding site; that stretch reads TPT. Position 208 (K208) interacts with 4-amino-2-methyl-5-(diphosphooxymethyl)pyrimidine. Position 236 (G236) interacts with 2-[(2R,5Z)-2-carboxy-4-methylthiazol-5(2H)-ylidene]ethyl phosphate.

The protein belongs to the thiamine-phosphate synthase family. Requires Mg(2+) as cofactor.

It carries out the reaction 2-[(2R,5Z)-2-carboxy-4-methylthiazol-5(2H)-ylidene]ethyl phosphate + 4-amino-2-methyl-5-(diphosphooxymethyl)pyrimidine + 2 H(+) = thiamine phosphate + CO2 + diphosphate. The enzyme catalyses 2-(2-carboxy-4-methylthiazol-5-yl)ethyl phosphate + 4-amino-2-methyl-5-(diphosphooxymethyl)pyrimidine + 2 H(+) = thiamine phosphate + CO2 + diphosphate. The catalysed reaction is 4-methyl-5-(2-phosphooxyethyl)-thiazole + 4-amino-2-methyl-5-(diphosphooxymethyl)pyrimidine + H(+) = thiamine phosphate + diphosphate. It participates in cofactor biosynthesis; thiamine diphosphate biosynthesis; thiamine phosphate from 4-amino-2-methyl-5-diphosphomethylpyrimidine and 4-methyl-5-(2-phosphoethyl)-thiazole: step 1/1. Functionally, condenses 4-methyl-5-(beta-hydroxyethyl)thiazole monophosphate (THZ-P) and 2-methyl-4-amino-5-hydroxymethyl pyrimidine pyrophosphate (HMP-PP) to form thiamine monophosphate (TMP). The sequence is that of Thiamine-phosphate synthase from Deinococcus radiodurans (strain ATCC 13939 / DSM 20539 / JCM 16871 / CCUG 27074 / LMG 4051 / NBRC 15346 / NCIMB 9279 / VKM B-1422 / R1).